The following is a 164-amino-acid chain: ATP synthase subunit b 1 (164 aa).

Residues 8-28 (PETWVAVAFVILMGVFAYFGV) traverse the membrane as a helical segment.

Belongs to the ATPase B chain family. As to quaternary structure, F-type ATPases have 2 components, F(1) - the catalytic core - and F(0) - the membrane proton channel. F(1) has five subunits: alpha(3), beta(3), gamma(1), delta(1), epsilon(1). F(0) has three main subunits: a(1), b(2) and c(10-14). The alpha and beta chains form an alternating ring which encloses part of the gamma chain. F(1) is attached to F(0) by a central stalk formed by the gamma and epsilon chains, while a peripheral stalk is formed by the delta and b chains.

It is found in the cell inner membrane. F(1)F(0) ATP synthase produces ATP from ADP in the presence of a proton or sodium gradient. F-type ATPases consist of two structural domains, F(1) containing the extramembraneous catalytic core and F(0) containing the membrane proton channel, linked together by a central stalk and a peripheral stalk. During catalysis, ATP synthesis in the catalytic domain of F(1) is coupled via a rotary mechanism of the central stalk subunits to proton translocation. Its function is as follows. Component of the F(0) channel, it forms part of the peripheral stalk, linking F(1) to F(0). In Rhodopseudomonas palustris (strain BisB18), this protein is ATP synthase subunit b 1.